The primary structure comprises 531 residues: Developmental and secondary metabolism regulator VE1 (531 aa).

Positions 26 to 220 (NRSLWYQMTV…ADQGCPVRIR (195 aa)) constitute a Velvet domain. The Nuclear localization signal signature appears at 40–45 (ERARAC). Disordered stretches follow at residues 206–435 (LSKT…SQTS) and 447–517 (PVSP…SRAD). The span at 244–253 (FERREEDFGR) shows a compositional bias: basic and acidic residues. Residues 295-306 (YPPPPPPPPSYE) show a composition bias toward pro residues. The segment covering 348 to 357 (YAPTSQSPYS) has biased composition (polar residues). The span at 381-390 (LKHELYDRRQ) shows a compositional bias: basic and acidic residues. Residues 391–405 (STSTYVPPSPSVYST) show a composition bias toward low complexity. Residues 416–427 (SYPPTPVAAPRP) show a composition bias toward pro residues. The interval 430–461 (MHSQTSLPALKIDQLVSPVSPLPPIEPQTGPA) is PEST. Over residues 479-491 (FAQSTRPLHNGQR) the composition is skewed to polar residues.

Belongs to the velvet family. VeA subfamily. Component of the heterotrimeric velvet complex composed of LAE1, VE1 and VELB; VE1 acting as a bridging protein between LAE1 and VELB. Interacts with VELB and VELC.

Its subcellular location is the nucleus. It localises to the cytoplasm. Its function is as follows. Component of the velvet transcription factor complex that controls sexual/asexual developmental ratio in response to light, promoting sexual development in the darkness while stimulating asexual sporulation under illumination. The velvet complex hat acts as a global regulator for secondary metabolite gene expression. Controls the expression of the cycotoxins fumonisins and fusarins gene cluster. Involved in cell wall integrity, cell surface hydrophobicity, hyphal polarity and conidiation pattern. Required for pathogenicity against maize seedlings. Involved in oxidative stress resistance by positively regulating the transcription of the catalase-encoding gene CAT2. The chain is Developmental and secondary metabolism regulator VE1 from Gibberella moniliformis (strain M3125 / FGSC 7600) (Maize ear and stalk rot fungus).